The chain runs to 252 residues: MSLAKRIVPCLDVHAGRVVKGVNFVNLRDAGDPVEAARAYDEAGADELVFLDISATHEERAILLDVVARVAERVFIPLTVGGGVRSLEDARKLLLSGADKVSVNSAAVRRPELIRELADHFGAQAVVLAIDARWRGDFPEVHVAGGRVPTGLHAVEWAVKGVELGAGEILLTSMDRDGTKEGYDLRLTRMVAEAVGVPVIASGGAGRMEHFLEAFQAGAEAALAASVFHFGEIPIPKLKRYLAEKGVHVRLD.

Catalysis depends on residues Asp-12 and Asp-131.

The protein belongs to the HisA/HisF family. As to quaternary structure, heterodimer of HisH and HisF.

The protein localises to the cytoplasm. It catalyses the reaction 5-[(5-phospho-1-deoxy-D-ribulos-1-ylimino)methylamino]-1-(5-phospho-beta-D-ribosyl)imidazole-4-carboxamide + L-glutamine = D-erythro-1-(imidazol-4-yl)glycerol 3-phosphate + 5-amino-1-(5-phospho-beta-D-ribosyl)imidazole-4-carboxamide + L-glutamate + H(+). It participates in amino-acid biosynthesis; L-histidine biosynthesis; L-histidine from 5-phospho-alpha-D-ribose 1-diphosphate: step 5/9. In terms of biological role, IGPS catalyzes the conversion of PRFAR and glutamine to IGP, AICAR and glutamate. The HisF subunit catalyzes the cyclization activity that produces IGP and AICAR from PRFAR using the ammonia provided by the HisH subunit. This is Imidazole glycerol phosphate synthase subunit HisF from Thermus thermophilus (strain ATCC 27634 / DSM 579 / HB8).